Consider the following 72-residue polypeptide: Translation initiation factor IF-1 (72 aa).

The S1-like domain occupies 1–72; that stretch reads MAKDNVIEIE…SKGRITYRFK (72 aa).

It belongs to the IF-1 family. As to quaternary structure, component of the 30S ribosomal translation pre-initiation complex which assembles on the 30S ribosome in the order IF-2 and IF-3, IF-1 and N-formylmethionyl-tRNA(fMet); mRNA recruitment can occur at any time during PIC assembly.

It is found in the cytoplasm. Its function is as follows. One of the essential components for the initiation of protein synthesis. Stabilizes the binding of IF-2 and IF-3 on the 30S subunit to which N-formylmethionyl-tRNA(fMet) subsequently binds. Helps modulate mRNA selection, yielding the 30S pre-initiation complex (PIC). Upon addition of the 50S ribosomal subunit IF-1, IF-2 and IF-3 are released leaving the mature 70S translation initiation complex. The polypeptide is Translation initiation factor IF-1 (Pediococcus pentosaceus (strain ATCC 25745 / CCUG 21536 / LMG 10740 / 183-1w)).